Reading from the N-terminus, the 728-residue chain is MATPGSEPQPFVPALSVATLHPLHHPHHHHHHHQHHGGTGAPGGAGGGGGGSGGFNLPLNRGLERALEEAANSGGLNLSARKLKEFPRTAAPGHDLSDTVQADLSKNRLVEVPMELCHFVSLEILNLYHNCIRVIPEAIVNLQMLTYLNLSRNQLSALPACLCGLPLKVLIASNNKLGSLPEEIGQLKQLMELDVSCNEITALPQQIGQLKSLRELNVRRNYLKVLPQELVDLSLVKFDFSCNKVLVIPICFREMKQLQVLLLENNPLQSPPAQICTKGKVHIFKYLSIQACQIKTADSLYLHTMERPHLHQHVEDGKKDSDSGVGSDNGDKRLSATEPSDEDTVSLNVPMSNIMEEEQIIKEDSCHRLSPVKGEFHQEFQPEPSLLGDSTNSGEERDQFTDRADGLHSEFMNYKARAEDCEELLRIEEDVHWQTEGIISSSKDQDMDIAMIEQLREAVDLLQDPNGLSTDITERSVLNLYPMGSAEALELQDSALNGQIQLETSPVCEVQSDLTLQSNGSQYSPNEIRENSPAVSPTTNSTAPFGLKPRSVFLRPQRNLESIDPQFTIRRKMEQMREEKELVEQLRESIEMRLKVSLHEDLGAALMDGVVLCHLVNHIRPRSVASIHVPSPAVPKLSMAKCRRNVENFLEACRKLGVPEADLCSPCDILQLDFRHIRKTVDTLLALGEKAPPPTSALRSRDLIGFCLVHILFIVLVYITYHWNALSA.

Residues 24–36 show a composition bias toward basic residues; it reads HHPHHHHHHHQHH. The tract at residues 24 to 57 is disordered; sequence HHPHHHHHHHQHHGGTGAPGGAGGGGGGSGGFNL. Gly residues predominate over residues 37–54; it reads GGTGAPGGAGGGGGGSGG. LRR repeat units lie at residues 98-119, 121-143, 144-166, 167-187, 189-210, 212-234, 235-255, 257-278, and 283-304; these read DTVQ…LCHF, SLEI…VNLQ, MLTY…CGLP, LKVL…IGQL, QLME…IGQL, SLRE…VDLS, LVKF…FREM, QLQV…ICTK, and IFKY…YLHT. Positions 311–322 are enriched in basic and acidic residues; sequence HQHVEDGKKDSD. The tract at residues 311-348 is disordered; it reads HQHVEDGKKDSDSGVGSDNGDKRLSATEPSDEDTVSLN. A Phosphoserine modification is found at Ser370. A disordered region spans residues 377–398; it reads HQEFQPEPSLLGDSTNSGEERD. Ser409 carries the phosphoserine modification. Residues 516-525 are compositionally biased toward polar residues; the sequence is LQSNGSQYSP. The tract at residues 516–547 is disordered; the sequence is LQSNGSQYSPNEIRENSPAVSPTTNSTAPFGL. Residues Ser532 and Ser536 each carry the phosphoserine modification. The segment covering 533-543 has biased composition (polar residues); the sequence is PAVSPTTNSTA. Position 568 is a phosphothreonine (Thr568). Residues 576 to 692 enclose the Calponin-homology (CH) domain; the sequence is MREEKELVEQ…TLLALGEKAP (117 aa).

As to quaternary structure, interacts (via LRR repeats) with unphosphorylated DOCK8 (via DHR-2 domain); the interaction prevents the interaction between DOCK8 and CDC42.

Its subcellular location is the cytoplasm. Its function is as follows. Acts as a negative regulator of GTPase CDC42 by sequestering CDC42-guanine exchange factor DOCK8. Probably by preventing CDC42 activation, negatively regulates CD4(+) T-cell migration. In Homo sapiens (Human), this protein is Leucine-rich repeat and calponin homology domain-containing protein 1 (LRCH1).